We begin with the raw amino-acid sequence, 103 residues long: Large ribosomal subunit protein uL24 (103 aa).

It belongs to the universal ribosomal protein uL24 family. In terms of assembly, part of the 50S ribosomal subunit.

One of two assembly initiator proteins, it binds directly to the 5'-end of the 23S rRNA, where it nucleates assembly of the 50S subunit. Functionally, one of the proteins that surrounds the polypeptide exit tunnel on the outside of the subunit. The sequence is that of Large ribosomal subunit protein uL24 from Synechococcus sp. (strain CC9311).